A 298-amino-acid polypeptide reads, in one-letter code: Probable GTP 3',8-cyclase (298 aa).

The 224-residue stretch at 4 to 227 folds into the Radical SAM core domain; that stretch reads RYGREIRSFR…MQNRKKYLID (224 aa). Position 13 (Arg-13) interacts with GTP. Residues Cys-20 and Cys-24 each coordinate [4Fe-4S] cluster. Tyr-26 contributes to the S-adenosyl-L-methionine binding site. Cys-27 contacts [4Fe-4S] cluster. Lys-61 lines the GTP pocket. Gly-65 is an S-adenosyl-L-methionine binding site. Residue Thr-91 coordinates GTP. An S-adenosyl-L-methionine-binding site is contributed by Ser-115. Lys-152 contacts GTP. [4Fe-4S] cluster contacts are provided by Cys-243 and Cys-246. 248 to 250 provides a ligand contact to GTP; sequence RIR. A [4Fe-4S] cluster-binding site is contributed by Cys-260.

The protein belongs to the radical SAM superfamily. MoaA family. [4Fe-4S] cluster serves as cofactor.

The catalysed reaction is GTP + AH2 + S-adenosyl-L-methionine = (8S)-3',8-cyclo-7,8-dihydroguanosine 5'-triphosphate + 5'-deoxyadenosine + L-methionine + A + H(+). It participates in cofactor biosynthesis; molybdopterin biosynthesis. Its function is as follows. Catalyzes the cyclization of GTP to (8S)-3',8-cyclo-7,8-dihydroguanosine 5'-triphosphate. This Methanococcus maripaludis (strain C5 / ATCC BAA-1333) protein is Probable GTP 3',8-cyclase.